A 285-amino-acid polypeptide reads, in one-letter code: Putative pyruvate, phosphate dikinase regulatory protein (285 aa).

165-172 (GVSRTSKT) provides a ligand contact to ADP.

It belongs to the pyruvate, phosphate/water dikinase regulatory protein family. PDRP subfamily.

The enzyme catalyses N(tele)-phospho-L-histidyl/L-threonyl-[pyruvate, phosphate dikinase] + ADP = N(tele)-phospho-L-histidyl/O-phospho-L-threonyl-[pyruvate, phosphate dikinase] + AMP + H(+). It carries out the reaction N(tele)-phospho-L-histidyl/O-phospho-L-threonyl-[pyruvate, phosphate dikinase] + phosphate + H(+) = N(tele)-phospho-L-histidyl/L-threonyl-[pyruvate, phosphate dikinase] + diphosphate. Bifunctional serine/threonine kinase and phosphorylase involved in the regulation of the pyruvate, phosphate dikinase (PPDK) by catalyzing its phosphorylation/dephosphorylation. The sequence is that of Putative pyruvate, phosphate dikinase regulatory protein from Lactobacillus delbrueckii subsp. bulgaricus (strain ATCC 11842 / DSM 20081 / BCRC 10696 / JCM 1002 / NBRC 13953 / NCIMB 11778 / NCTC 12712 / WDCM 00102 / Lb 14).